Here is a 491-residue protein sequence, read N- to C-terminus: Cobyric acid synthase (491 aa).

The 191-residue stretch at 249–439 folds into the GATase cobBQ-type domain; that stretch reads PIDIAVIKLP…IHGVFDGVEF (191 aa). The active-site Nucleophile is Cys329. The active site involves His431.

This sequence belongs to the CobB/CobQ family. CobQ subfamily.

It participates in cofactor biosynthesis; adenosylcobalamin biosynthesis. Functionally, catalyzes amidations at positions B, D, E, and G on adenosylcobyrinic A,C-diamide. NH(2) groups are provided by glutamine, and one molecule of ATP is hydrogenolyzed for each amidation. The chain is Cobyric acid synthase from Clostridium tetani (strain Massachusetts / E88).